Here is a 241-residue protein sequence, read N- to C-terminus: Carboxy-S-adenosyl-L-methionine synthase (241 aa).

S-adenosyl-L-methionine is bound by residues Y38, 63–65 (GCS), 88–89 (DN), 116–117 (DI), N131, and R198.

This sequence belongs to the class I-like SAM-binding methyltransferase superfamily. Cx-SAM synthase family. In terms of assembly, homodimer.

It carries out the reaction prephenate + S-adenosyl-L-methionine = carboxy-S-adenosyl-L-methionine + 3-phenylpyruvate + H2O. Functionally, catalyzes the conversion of S-adenosyl-L-methionine (SAM) to carboxy-S-adenosyl-L-methionine (Cx-SAM). The chain is Carboxy-S-adenosyl-L-methionine synthase from Haemophilus influenzae (strain PittEE).